The primary structure comprises 989 residues: Cation-chloride cotransporter 1 (989 aa).

Positions 1-10 are enriched in acidic residues; it reads MENGEIEGAA. Positions 1 to 29 are disordered; that stretch reads MENGEIEGAADDGVPVPAPPNGRRYRPVG. Topologically, residues 1–132 are cytoplasmic; that stretch reads MENGEIEGAA…GRPKETGPKF (132 aa). Residues 133-153 traverse the membrane as a helical segment; sequence GTMMGVFVPCLQNILGIIYYI. Residues 154-167 are Extracellular-facing; it reads RFTWIVGMAGVWQS. Residues 168-188 traverse the membrane as a helical segment; sequence LVLVSFCGACTFLTGISLSAI. Over 189 to 214 the chain is Cytoplasmic; it reads ATNGAMKGGGPYYLIGRALGPEVGVS. The chain crosses the membrane as a helical span at residues 215–235; that stretch reads IGLCFFLGNAVAGSMYVLGAV. At 236–280 the chain is on the extracellular side; that stretch reads ETFLDAVPSAGFFKESVTVVNNTLVNGTATASTATISTPSLHDLQ. Residues asparagine 256 and asparagine 261 are each glycosylated (N-linked (GlcNAc...) asparagine). Residues 281–301 form a helical membrane-spanning segment; it reads VYGVIVTILLCFIVFGGVKII. The Cytoplasmic segment spans residues 302–304; that stretch reads NKV. The chain crosses the membrane as a helical span at residues 305–325; it reads APAFLIPVLFSLLCIYLGVFI. Over 326-365 the chain is Extracellular; it reads APRHNAPKGITGLSITTFKDNWGSEYQRTNNAGVPDPNGS. Asparagine 363 carries N-linked (GlcNAc...) asparagine glycosylation. The helical transmembrane segment at 366–386 threads the bilayer; that stretch reads IYWDFNALVGLFFPAVTGIMA. Topologically, residues 387–405 are cytoplasmic; it reads GSNRSASLKDTQRSIPIGT. The chain crosses the membrane as a helical span at residues 406 to 426; sequence LSATLTTTAMYLFSVLLFGAL. The Extracellular portion of the chain corresponds to 427–441; it reads ATREELLTDRLLTAT. The helical transmembrane segment at 442–462 threads the bilayer; the sequence is VAWPAPAVIYIGIILSTLGAA. At 463-498 the chain is on the cytoplasmic side; that stretch reads LQSLTGAPRLLAAIANDDILPVLNYFKVSEGAEPHS. A helical membrane pass occupies residues 499–519; that stretch reads ATLFTAFICICCVVIGNLDLI. Over 520 to 522 the chain is Extracellular; it reads TPT. Residues 523–543 form a helical membrane-spanning segment; that stretch reads ITMFFLLCYAGVNLSCFLLDL. The Cytoplasmic segment spans residues 544–551; sequence LDAPSWRP. The chain crosses the membrane as a helical span at residues 552 to 572; sequence RWKFHHWSLSLVGALLCVVIM. Residues 573–578 lie on the Extracellular side of the membrane; sequence FLISWS. A helical transmembrane segment spans residues 579–599; sequence FTVVSLALASLIYYYVSLKGK. At 600-989 the chain is on the cytoplasmic side; it reads AGDWGDGFKS…YRRDVVTFFT (390 aa).

Belongs to the SLC12A transporter family. As to expression, expressed in roots, stems and leaves with higher expression in root and leaf tips.

Its subcellular location is the membrane. Its function is as follows. Probable cation/chloride cotransporter that may mediate potassium-chloride cotransport. Involved in plant development and K(+) and Cl(-) homeostasis. May not be involved in sodium-chloride cotransport. This Oryza sativa subsp. japonica (Rice) protein is Cation-chloride cotransporter 1 (CCC1).